A 150-amino-acid chain; its full sequence is Stage V sporulation protein AC (150 aa).

The next 4 helical transmembrane spans lie at 30-50, 57-77, 84-104, and 121-141; these read LVGG…IHFF, AGNP…GFGI, FAGA…ASAA, and FKLA…VGMI.

It localises to the cell membrane. The chain is Stage V sporulation protein AC (spoVAC) from Bacillus subtilis (strain 168).